A 1405-amino-acid polypeptide reads, in one-letter code: DNA-directed RNA polymerase subunit beta' (1405 aa).

Residues Cys70, Cys72, Cys85, and Cys88 each coordinate Zn(2+). Residues Asp460, Asp462, and Asp464 each coordinate Mg(2+). Positions 815, 890, 897, and 900 each coordinate Zn(2+).

It belongs to the RNA polymerase beta' chain family. In terms of assembly, the RNAP catalytic core consists of 2 alpha, 1 beta, 1 beta' and 1 omega subunit. When a sigma factor is associated with the core the holoenzyme is formed, which can initiate transcription. Mg(2+) is required as a cofactor. Requires Zn(2+) as cofactor.

It catalyses the reaction RNA(n) + a ribonucleoside 5'-triphosphate = RNA(n+1) + diphosphate. Functionally, DNA-dependent RNA polymerase catalyzes the transcription of DNA into RNA using the four ribonucleoside triphosphates as substrates. The polypeptide is DNA-directed RNA polymerase subunit beta' (Xanthomonas campestris pv. campestris (strain B100)).